A 234-amino-acid polypeptide reads, in one-letter code: BTB/POZ domain-containing protein KCTD5 (234 aa).

Ala2 carries the post-translational modification N-acetylalanine. The region spanning 44–146 (KWVRLNVGGT…LVKDKIRERD (103 aa)) is the BTB domain. Positions 213–234 (PYGTTSEPSEKAKILQERGSRM) are disordered. The segment covering 220-234 (PSEKAKILQERGSRM) has biased composition (basic and acidic residues).

As to quaternary structure, homopentamer. Interacts (via C-terminus) with GRASP55/GORASP2. Interacts with CUL3 and with ubiquitinated proteins. Interacts with CRY1.

The protein resides in the cytoplasm. The protein localises to the cytosol. Its subcellular location is the nucleus. In terms of biological role, its interaction with CUL3 suggests that it may act as a substrate adapter in some E3 ligase complex. Does not affect the function of Kv channel Kv2.1/KCNB1, Kv1.2/KCNA2, Kv4.2/KCND2 and Kv3.4/KCNC4. The sequence is that of BTB/POZ domain-containing protein KCTD5 (Kctd5) from Rattus norvegicus (Rat).